Reading from the N-terminus, the 363-residue chain is Large ribosomal subunit protein uL4 (363 aa).

This sequence belongs to the universal ribosomal protein uL4 family. Component of the large ribosomal subunit. Mature ribosomes consist of a small (40S) and a large (60S) subunit. The 40S subunit contains about 32 different proteins and 1 molecule of RNA (18S). The 60S subunit contains 45 different proteins and 3 molecules of RNA (25S, 5.8S and 5S).

Its subcellular location is the cytoplasm. Component of the ribosome, a large ribonucleoprotein complex responsible for the synthesis of proteins in the cell. The small ribosomal subunit (SSU) binds messenger RNAs (mRNAs) and translates the encoded message by selecting cognate aminoacyl-transfer RNA (tRNA) molecules. The large subunit (LSU) contains the ribosomal catalytic site termed the peptidyl transferase center (PTC), which catalyzes the formation of peptide bonds, thereby polymerizing the amino acids delivered by tRNAs into a polypeptide chain. The nascent polypeptides leave the ribosome through a tunnel in the LSU and interact with protein factors that function in enzymatic processing, targeting, and the membrane insertion of nascent chains at the exit of the ribosomal tunnel. This Candida albicans (strain SC5314 / ATCC MYA-2876) (Yeast) protein is Large ribosomal subunit protein uL4.